Consider the following 496-residue polypeptide: Cytochrome P450 71D180 (496 aa).

The chain crosses the membrane as a helical; Signal-anchor for type II membrane protein span at residues 1 to 21 (MDISISWVVIIVFVLSYLILM). Residue cysteine 435 coordinates heme. The interval 471 to 496 (MSETPGLSGPRKNPLIMIPTIHNPTS) is disordered.

This sequence belongs to the cytochrome P450 family. It depends on heme as a cofactor.

The protein resides in the membrane. It catalyses the reaction gamma-terpinene + 2 reduced [NADPH--hemoprotein reductase] + 2 O2 = carvacrol + 2 oxidized [NADPH--hemoprotein reductase] + 3 H2O + 2 H(+). The enzyme catalyses (4S)-limonene + reduced [NADPH--hemoprotein reductase] + O2 = (1S,5R)-carveol + oxidized [NADPH--hemoprotein reductase] + H2O + H(+). The catalysed reaction is (4R)-limonene + reduced [NADPH--hemoprotein reductase] + O2 = (1R,5S)-carveol + oxidized [NADPH--hemoprotein reductase] + H2O + H(+). It participates in secondary metabolite biosynthesis; terpenoid biosynthesis. In terms of biological role, involved in the biosynthesis of phenolic monoterpenes natural products thymol and carvacrol which have a broad range of biological activities acting as antimicrobial compounds, insecticides, antioxidants and pharmaceutical agents. Catalyzes the C2-hydroxylation of gamma-terpinene to produce carvacrol. Mediates also the C6-hydroxylation of (4S)-limonene and (4R)-limonene to form carveol. The protein is Cytochrome P450 71D180 of Origanum majorana (Sweet marjoram).